We begin with the raw amino-acid sequence, 514 residues long: Mitochondrial-processing peptidase subunit alpha (514 aa).

Residues Met1 to Asn55 constitute a mitochondrion transit peptide.

Belongs to the peptidase M16 family. In terms of assembly, heterodimer of mppa-1 (alpha) and mppb-1 (beta) subunits, forming the mitochondrial processing protease (MPP) in which mppa-1 is involved in substrate recognition and binding and mppb-1 is the catalytic subunit.

It is found in the mitochondrion matrix. Its function is as follows. Substrate recognition and binding subunit of the essential mitochondrial processing protease (MPP), which cleaves the mitochondrial sequence off newly imported precursors proteins. This chain is Mitochondrial-processing peptidase subunit alpha, found in Caenorhabditis elegans.